The sequence spans 133 residues: MDPEYSELFERLNKQLDNVEDVLKPLKDAESIFELAEGKSELEQAKLYITMSYAINSTLYSFYKLNGIDASERPVMQELQRVKNYISKIQQAEKNVNPKTEAVNTSNAAISSSSSNRPKVAKDAATRIIKHHT.

The disordered stretch occupies residues 96–133 (VNPKTEAVNTSNAAISSSSSNRPKVAKDAATRIIKHHT). The span at 102–116 (AVNTSNAAISSSSSN) shows a compositional bias: low complexity.

It belongs to the C1D family. As to quaternary structure, component of the exosome multienzyme ribonuclease complex. Interacts with cut3.

Its subcellular location is the cytoplasm. The protein resides in the nucleus. In terms of biological role, required for exosome-dependent processing of pre-rRNA and small nucleolar RNA (snRNA) precursors. Involved in processing of 35S pre-rRNA at the A0, A1 and A2 sites. This is Exosome complex protein C1739.07 from Schizosaccharomyces pombe (strain 972 / ATCC 24843) (Fission yeast).